We begin with the raw amino-acid sequence, 658 residues long: tRNA uridine 5-carboxymethylaminomethyl modification enzyme MnmG (658 aa).

13–18 (GAGHAG) contacts FAD. NAD(+) is bound at residue 285–299 (GPRYCPSVEDKINRF).

Belongs to the MnmG family. Homodimer. Heterotetramer of two MnmE and two MnmG subunits. FAD serves as cofactor.

It localises to the cytoplasm. NAD-binding protein involved in the addition of a carboxymethylaminomethyl (cmnm) group at the wobble position (U34) of certain tRNAs, forming tRNA-cmnm(5)s(2)U34. In Verminephrobacter eiseniae (strain EF01-2), this protein is tRNA uridine 5-carboxymethylaminomethyl modification enzyme MnmG.